The sequence spans 342 residues: Succinylglutamate desuccinylase (342 aa).

3 residues coordinate Zn(2+): histidine 63, glutamate 66, and histidine 155. Glutamate 219 is an active-site residue.

It belongs to the AspA/AstE family. Succinylglutamate desuccinylase subfamily. Zn(2+) is required as a cofactor.

The catalysed reaction is N-succinyl-L-glutamate + H2O = L-glutamate + succinate. The protein operates within amino-acid degradation; L-arginine degradation via AST pathway; L-glutamate and succinate from L-arginine: step 5/5. In terms of biological role, transforms N(2)-succinylglutamate into succinate and glutamate. In Vibrio vulnificus (strain CMCP6), this protein is Succinylglutamate desuccinylase.